A 242-amino-acid polypeptide reads, in one-letter code: ATP synthase subunit a (242 aa).

6 helical membrane passes run 29 to 49 (SSIYMLLASTLALTYFYLAFY), 84 to 104 (FIPLVFSLFIFILFCNLLGMT), 114 to 134 (IIVTFTLALLIFLTVTIVGFI), 140 to 160 (FLTLFLPQGTPVWLAPLMIVI), 181 to 201 (MAGHVLLKVIAGFTVSLMIYL), and 203 to 223 (FLPIPLIVILIGFEIFVAILQ).

Belongs to the ATPase A chain family. As to quaternary structure, F-type ATPases have 2 components, CF(1) - the catalytic core - and CF(0) - the membrane proton channel. CF(1) has five subunits: alpha(3), beta(3), gamma(1), delta(1), epsilon(1). CF(0) has three main subunits: a(1), b(2) and c(9-12). The alpha and beta chains form an alternating ring which encloses part of the gamma chain. CF(1) is attached to CF(0) by a central stalk formed by the gamma and epsilon chains, while a peripheral stalk is formed by the delta and b chains.

Its subcellular location is the cell inner membrane. Functionally, key component of the proton channel; it plays a direct role in the translocation of protons across the membrane. The polypeptide is ATP synthase subunit a (Rickettsia typhi (strain ATCC VR-144 / Wilmington)).